Here is a 213-residue protein sequence, read N- to C-terminus: Orotate phosphoribosyltransferase (213 aa).

Lys26 provides a ligand contact to 5-phospho-alpha-D-ribose 1-diphosphate. An orotate-binding site is contributed by 34-35 (FF). Residues 72 to 73 (YK), Arg99, Lys100, Lys103, His105, and 124 to 132 (DDVITAGTA) contribute to the 5-phospho-alpha-D-ribose 1-diphosphate site. Orotate contacts are provided by Thr128 and Arg156.

It belongs to the purine/pyrimidine phosphoribosyltransferase family. PyrE subfamily. In terms of assembly, homodimer. Mg(2+) serves as cofactor.

It carries out the reaction orotidine 5'-phosphate + diphosphate = orotate + 5-phospho-alpha-D-ribose 1-diphosphate. It functions in the pathway pyrimidine metabolism; UMP biosynthesis via de novo pathway; UMP from orotate: step 1/2. Its function is as follows. Catalyzes the transfer of a ribosyl phosphate group from 5-phosphoribose 1-diphosphate to orotate, leading to the formation of orotidine monophosphate (OMP). This is Orotate phosphoribosyltransferase from Salmonella typhi.